Reading from the N-terminus, the 901-residue chain is Probable inorganic carbon transporter subunit DabA (901 aa).

Zn(2+)-binding residues include cysteine 424, aspartate 426, histidine 606, and cysteine 621.

It belongs to the inorganic carbon transporter (TC 9.A.2) DabA family. As to quaternary structure, forms a complex with DabB. Zn(2+) is required as a cofactor.

It localises to the cell membrane. Part of an energy-coupled inorganic carbon pump. This chain is Probable inorganic carbon transporter subunit DabA, found in Staphylococcus aureus (strain MRSA252).